Reading from the N-terminus, the 800-residue chain is Protein SPT2 homolog (800 aa).

The tract at residues Met1–Pro687 is important for interaction with DNA. The stretch at Gln53–Ala82 forms a coiled coil. Disordered regions lie at residues Leu70 to Asn173, Lys197 to Pro646, and Val661 to Tyr698. The segment covering Thr124–Tyr137 has biased composition (acidic residues). Positions Pro155–Gly164 are enriched in low complexity. A coiled-coil region spans residues Lys196–Asp224. 2 stretches are compositionally biased toward basic and acidic residues: residues Lys197–Met226 and His249–Ser259. The span at Lys260 to Lys272 shows a compositional bias: polar residues. Basic and acidic residues predominate over residues Ser273–Phe295. Composition is skewed to low complexity over residues Ser328–Lys360, Ser367–Gly377, Gly390–Ala424, Gly443–Gly501, and Gly514–Ser581. The span at Asn608 to Gly626 shows a compositional bias: polar residues. A compositionally biased stretch (pro residues) spans Met684–Pro693. Positions Gly688 to Arg800 are important for interaction with histones. Residues Arg756 to Arg800 adopt a coiled-coil conformation.

It belongs to the SPT2 family. Interacts with histones. Interacts with a heterotetrameric complex formed by histone H3 and H4, especially when the histone tetramer is not bound to DNA.

The protein resides in the nucleus. Its subcellular location is the nucleolus. In terms of biological role, histone chaperone that stabilizes pre-existing histone tetramers and regulates replication-independent histone exchange on chromatin. Required for normal chromatin refolding in the coding region of transcribed genes, and for the suppression of spurious transcription. Binds DNA and histones and promotes nucleosome assembly (in vitro). Facilitates formation of tetrameric histone complexes containing histone H3 and H4. Modulates RNA polymerase 1-mediated transcription. Binds DNA, with a preference for branched DNA species, such as Y-form DNA and Holliday junction DNA. The sequence is that of Protein SPT2 homolog (spty2d1) from Xenopus laevis (African clawed frog).